A 227-amino-acid chain; its full sequence is Bone marrow proteoglycan (227 aa).

Positions M1–A16 are cleaved as a signal peptide. Residues L17–K110 constitute a propeptide, acidic. Residues S21 to G105 form a disordered region. Residue S24 is glycosylated (O-linked (GalNAc...) serine). Residues S34–V46 are compositionally biased toward basic and acidic residues. Residues L58–S70 show a composition bias toward acidic residues. S70 carries an O-linked (Xyl...) (chondroitin sulfate) serine glycan. In terms of domain architecture, C-type lectin spans L128–Y227. Intrachain disulfides connect C130/C225 and C202/C217.

Nitrated.

The protein localises to the secreted. Cytotoxin and helminthotoxin. MBP also induces non-cytolytic histamine release from basophils. It is involved in antiparasitic defense mechanisms and immune hypersensitivity reactions. This is Bone marrow proteoglycan (Prg2) from Rattus norvegicus (Rat).